Reading from the N-terminus, the 930-residue chain is MRLEWAPLLLLLLLLSASCLSLAADSPAAAPAQDKTRQPQAAAAAAEPDQPQGEETRERGHLQPLAGQRRSGGLVQNIDQLYSGGGKVGYLVYAGGRRFLLDLERDDTVGAAGSIVTAGGGLSASSGHRGHCFYRGTVDGSPRSLAVFDLCGGLDGFFAVKHARYTLKPLLRGSWAEYERIYGDGSSRILHVYNREGFSFEALPPRASCETPASPSGPQESPSVHSRSRRRSALAPQLLDHSAFSPSGNAGPQTWWRRRRRSISRARQVELLLVADSSMARMYGRGLQHYLLTLASIANRLYSHASIENHIRLAVVKVVVLTDKDTSLEVSKNAATTLKNFCKWQHQHNQLGDDHEEHYDAAILFTREDLCGHHSCDTLGMADVGTICSPERSCAVIEDDGLHAAFTVAHEIGHLLGLSHDDSKFCEENFGTTEDKRLMSSILTSIDASKPWSKCTSATITEFLDDGHGNCLLDLPRKQILGPEELPGQTYDATQQCNLTFGPEYSVCPGMDVCARLWCAVVRQGQMVCLTKKLPAVEGTPCGKGRVCLQGKCVDKTKKKYYSTSSHGNWGSWGPWGQCSRSCGGGVQFAYRHCNNPAPRNSGRYCTGKRAIYRSCSVTPCPPNGKSFRHEQCEAKNGYQSDAKGVKTFVEWVPKYAGVLPADVCKLTCRAKGTGYYVVFSPKVTDGTECRPYSNSVCVRGRCVRTGCDGIIGSKLQYDKCGVCGGDNSSCTKIIGTFNKKSKGYTDVVRIPEGATHIKVRQFKAKDQTRFTAYLALKKKTGEYLINGKYMISTSETIIDINGTVMNYSGWSHRDDFLHGMGYSATKEILIVQILATDPTKALDVRYSFFVPKKTTQKVNSVISHGSNKVGPHSTQLQWVTGPWLACSRTCDTGWHTRTVQCQDGNRKLAKGCLLSQRPSAFKQCLLKKC.

Positions 1-21 (MRLEWAPLLLLLLLLSASCLS) are cleaved as a signal peptide. Positions 22–261 (LAADSPAAAP…PQTWWRRRRR (240 aa)) are excised as a propeptide. Low complexity predominate over residues 31-53 (PAQDKTRQPQAAAAAAEPDQPQG). 2 disordered regions span residues 31–68 (PAQD…LAGQ) and 207–231 (ASCE…SRRR). Positions 207–214 (ASCETPAS) match the Cysteine switch motif. Cysteine 209 contributes to the Zn(2+) binding site. Residues 211 to 225 (TPASPSGPQESPSVH) are compositionally biased toward polar residues. Residues 267-476 (RQVELLLVAD…GHGNCLLDLP (210 aa)) form the Peptidase M12B domain. Cystine bridges form between cysteine 342/cysteine 394, cysteine 371/cysteine 376, cysteine 388/cysteine 471, cysteine 426/cysteine 455, cysteine 497/cysteine 519, cysteine 508/cysteine 529, cysteine 514/cysteine 548, and cysteine 542/cysteine 553. Residue histidine 410 coordinates Zn(2+). Glutamate 411 is an active-site residue. 2 residues coordinate Zn(2+): histidine 414 and histidine 420. The 82-residue stretch at 485 to 566 (ELPGQTYDAT…TKKKYYSTSS (82 aa)) folds into the Disintegrin domain. N-linked (GlcNAc...) asparagine glycosylation is present at asparagine 498. One can recognise a TSP type-1 1 domain in the interval 567–622 (HGNWGSWGPWGQCSRSCGGGVQFAYRHCNNPAPRNSGRYCTGKRAIYRSCSVTPCP). Residues tryptophan 570 and tryptophan 573 are each glycosylated (C-linked (Man) tryptophan). 3 disulfides stabilise this stretch: cysteine 579/cysteine 616, cysteine 583/cysteine 621, and cysteine 594/cysteine 606. Residue serine 582 is glycosylated (O-linked (Fuc...) serine). Residues asparagine 728, asparagine 802, and asparagine 807 are each glycosylated (N-linked (GlcNAc...) asparagine). Positions 732–874 (TKIIGTFNKK…HGSNKVGPHS (143 aa)) are spacer. A TSP type-1 2 domain is found at 875–929 (TQLQWVTGPWLACSRTCDTGWHTRTVQCQDGNRKLAKGCLLSQRPSAFKQCLLKK).

Zn(2+) serves as cofactor. In terms of processing, the precursor is cleaved by furin and PCSK7 outside of the cell. Glycosylated. Can be O-fucosylated by POFUT2 on a serine or a threonine residue found within the consensus sequence C1-X(2)-(S/T)-C2-G of the TSP type-1 repeat domains where C1 and C2 are the first and second cysteine residue of the repeat, respectively. Fucosylated repeats can then be further glycosylated by the addition of a beta-1,3-glucose residue by the glucosyltransferase, B3GALTL. Fucosylation mediates the efficient secretion of ADAMTS family members. Can also be C-glycosylated with one or two mannose molecules on tryptophan residues within the consensus sequence W-X-X-W of the TPRs, and N-glycosylated. These other glycosylations can also facilitate secretion. In terms of tissue distribution, expressed in skeletal muscle.

The protein localises to the secreted. Its subcellular location is the extracellular space. It localises to the extracellular matrix. In terms of biological role, metalloproteinase that plays an important role in connective tissue organization, development, inflammation and cell migration. Extracellular matrix (ECM) degrading enzyme that shows proteolytic activity toward the hyalectan group of chondroitin sulfate proteoglycans (CSPGs) including ACAN, VCAN, BCAN and NCAN. Cleavage within the hyalectans occurs at Glu-Xaa recognition motifs. Plays a role in embryonic development, including limb and cardiac morphogenesis, and skeletal muscle development through its VCAN remodeling properties. Cleaves VCAN in the pericellular matrix surrounding myoblasts, facilitating myoblast contact and fusion which is required for skeletal muscle development and regeneration. Participates in the development of brown adipose tissue and browning of white adipose tissue. Plays an important role for T-lymphocyte migration from draining lymph nodes following viral infection. The sequence is that of A disintegrin and metalloproteinase with thrombospondin motifs 5 (Adamts5) from Mus musculus (Mouse).